A 37-amino-acid polypeptide reads, in one-letter code: Large ribosomal subunit protein bL36c (37 aa).

It belongs to the bacterial ribosomal protein bL36 family.

The protein resides in the plastid. It localises to the chloroplast. This chain is Large ribosomal subunit protein bL36c (rpl36), found in Chlamydomonas reinhardtii (Chlamydomonas smithii).